The following is a 233-amino-acid chain: Octanoyltransferase (233 aa).

Residues 38 to 218 (AGGPDTLLLL…LVCDALDGVL (181 aa)) form the BPL/LPL catalytic domain. Residues 57-66 (RRTEPHERPL) show a composition bias toward basic and acidic residues. The interval 57–77 (RRTEPHERPLDGTPVVDTDRG) is disordered. Residues 76 to 83 (RGGKITWH), 148 to 150 (AIG), and 161 to 163 (GFA) contribute to the substrate site. Cys-179 acts as the Acyl-thioester intermediate in catalysis.

This sequence belongs to the LipB family.

It is found in the cytoplasm. It carries out the reaction octanoyl-[ACP] + L-lysyl-[protein] = N(6)-octanoyl-L-lysyl-[protein] + holo-[ACP] + H(+). It participates in protein modification; protein lipoylation via endogenous pathway; protein N(6)-(lipoyl)lysine from octanoyl-[acyl-carrier-protein]: step 1/2. Its function is as follows. Catalyzes the transfer of endogenously produced octanoic acid from octanoyl-acyl-carrier-protein onto the lipoyl domains of lipoate-dependent enzymes. Lipoyl-ACP can also act as a substrate although octanoyl-ACP is likely to be the physiological substrate. This is Octanoyltransferase from Mycobacterium avium (strain 104).